The chain runs to 356 residues: Phosphoribosylformylglycinamidine cyclo-ligase (356 aa).

The protein belongs to the AIR synthase family.

It is found in the cytoplasm. The catalysed reaction is 2-formamido-N(1)-(5-O-phospho-beta-D-ribosyl)acetamidine + ATP = 5-amino-1-(5-phospho-beta-D-ribosyl)imidazole + ADP + phosphate + H(+). Its pathway is purine metabolism; IMP biosynthesis via de novo pathway; 5-amino-1-(5-phospho-D-ribosyl)imidazole from N(2)-formyl-N(1)-(5-phospho-D-ribosyl)glycinamide: step 2/2. This chain is Phosphoribosylformylglycinamidine cyclo-ligase, found in Acinetobacter baylyi (strain ATCC 33305 / BD413 / ADP1).